The following is a 410-amino-acid chain: Adenosylhomocysteinase (410 aa).

Substrate-binding residues include Asp-117 and Glu-142. An NAD(+)-binding site is contributed by 143 to 145; sequence TTT. The substrate site is built by Lys-172 and Asp-176. NAD(+) contacts are provided by residues Asn-177, 206-211, Glu-229, 285-287, and Asn-332; these read GYGYCG and AGH.

Belongs to the adenosylhomocysteinase family. It depends on NAD(+) as a cofactor.

It localises to the cytoplasm. It catalyses the reaction S-adenosyl-L-homocysteine + H2O = L-homocysteine + adenosine. The protein operates within amino-acid biosynthesis; L-homocysteine biosynthesis; L-homocysteine from S-adenosyl-L-homocysteine: step 1/1. Its function is as follows. May play a key role in the regulation of the intracellular concentration of adenosylhomocysteine. This is Adenosylhomocysteinase from Thermoplasma volcanium (strain ATCC 51530 / DSM 4299 / JCM 9571 / NBRC 15438 / GSS1).